The chain runs to 86 residues: Exodeoxyribonuclease 7 small subunit (86 aa).

The protein belongs to the XseB family. As to quaternary structure, heterooligomer composed of large and small subunits.

Its subcellular location is the cytoplasm. It carries out the reaction Exonucleolytic cleavage in either 5'- to 3'- or 3'- to 5'-direction to yield nucleoside 5'-phosphates.. In terms of biological role, bidirectionally degrades single-stranded DNA into large acid-insoluble oligonucleotides, which are then degraded further into small acid-soluble oligonucleotides. The chain is Exodeoxyribonuclease 7 small subunit from Bacillus licheniformis (strain ATCC 14580 / DSM 13 / JCM 2505 / CCUG 7422 / NBRC 12200 / NCIMB 9375 / NCTC 10341 / NRRL NRS-1264 / Gibson 46).